Consider the following 145-residue polypeptide: Large ribosomal subunit protein uL24 (145 aa).

2 disordered regions span residues 1–21 (MKFN…HFNA) and 122–145 (KAKS…KMQE). K136 is covalently cross-linked (Glycyl lysine isopeptide (Lys-Gly) (interchain with G-Cter in SUMO2)). Residue T139 is modified to Phosphothreonine.

It belongs to the universal ribosomal protein uL24 family. As to quaternary structure, component of the large ribosomal subunit. Interacts with DHX33. In terms of processing, ufmylated by UFL1 in response to endoplasmic reticulum stress, promoting reticulophagy of endoplasmic reticulum sheets.

Its subcellular location is the cytoplasm. Its function is as follows. Component of the large ribosomal subunit. The ribosome is a large ribonucleoprotein complex responsible for the synthesis of proteins in the cell. This Bos taurus (Bovine) protein is Large ribosomal subunit protein uL24 (RPL26).